The chain runs to 70 residues: Large ribosomal subunit protein uL29 (70 aa).

It belongs to the universal ribosomal protein uL29 family.

The protein is Large ribosomal subunit protein uL29 of Clostridium botulinum (strain Alaska E43 / Type E3).